The chain runs to 430 residues: Bystin (430 aa).

Composition is skewed to basic residues over residues 1–12 (MGKDKKDRKHKG) and 26–35 (PSKRVKHRRE). Disordered stretches follow at residues 1–45 (MGKD…ESFV) and 65–113 (MEEY…SETY). A compositionally biased stretch (basic and acidic residues) spans 68–78 (YGFRKTGDRKT). A compositionally biased stretch (acidic residues) spans 93–104 (RIDDDDEDDSDD).

It belongs to the bystin family.

The protein localises to the nucleus. Its subcellular location is the nucleolus. Its function is as follows. Required for processing of 20S pre-rRNA precursor and biogenesis of 40S ribosomal subunits. This Nematostella vectensis (Starlet sea anemone) protein is Bystin (bysl).